Reading from the N-terminus, the 436-residue chain is S-locus-specific glycoprotein S6 (436 aa).

Positions 1-31 (MKGVRKPYDNSYTLSFLLVFFVLILFCPAFS) are cleaved as a signal peptide. Residues 34 to 156 (TLSSTESLRI…SNNDASEYLW (123 aa)) enclose the Bulb-type lectin domain. N-linked (GlcNAc...) asparagine glycans are attached at residues asparagine 46, asparagine 64, asparagine 114, asparagine 121, asparagine 245, asparagine 261, and asparagine 390. The region spanning 351 to 431 (CSGDGFTRMK…HGQDLYVRLA (81 aa)) is the PAN domain. 2 disulfide bridges follow: cysteine 381–cysteine 406 and cysteine 389–cysteine 391.

Stigma.

Its function is as follows. Involved in sporophytic self-incompatibility system (the inability of flowering plants to achieve self-fertilization). This chain is S-locus-specific glycoprotein S6 (SLSG), found in Brassica oleracea (Wild cabbage).